The chain runs to 87 residues: LYR motif-containing protein 2 (87 aa).

Residues 1–19 (MGSRLPPAALTLKQFLVRQ) constitute a mitochondrion transit peptide.

It belongs to the complex I LYR family.

It is found in the mitochondrion. Its function is as follows. Involved in efficient integration of the N-module into mitochondrial respiratory chain complex I. This Xenopus tropicalis (Western clawed frog) protein is LYR motif-containing protein 2 (lyrm2).